The sequence spans 547 residues: Chaperonin GroEL 1 (547 aa).

ATP contacts are provided by residues 30–33, Lys-51, 87–91, Gly-415, and Asp-496; these read TLGP and DGTTT. Residues 525–547 form a disordered region; it reads KPEPKSPAGGPGMGGMGGMDGMM. The span at 533–547 shows a compositional bias: gly residues; it reads GGPGMGGMGGMDGMM.

The protein belongs to the chaperonin (HSP60) family. Forms a cylinder of 14 subunits composed of two heptameric rings stacked back-to-back. Interacts with the co-chaperonin GroES.

The protein localises to the cytoplasm. The enzyme catalyses ATP + H2O + a folded polypeptide = ADP + phosphate + an unfolded polypeptide.. Functionally, together with its co-chaperonin GroES, plays an essential role in assisting protein folding. The GroEL-GroES system forms a nano-cage that allows encapsulation of the non-native substrate proteins and provides a physical environment optimized to promote and accelerate protein folding. The sequence is that of Chaperonin GroEL 1 from Cereibacter sphaeroides (strain ATCC 17023 / DSM 158 / JCM 6121 / CCUG 31486 / LMG 2827 / NBRC 12203 / NCIMB 8253 / ATH 2.4.1.) (Rhodobacter sphaeroides).